Consider the following 778-residue polypeptide: Serine/threonine-protein kinase BRSK1 (778 aa).

The span at 1–12 shows a compositional bias: gly residues; the sequence is MSSGSKEGGGGS. Residues 1–29 are disordered; that stretch reads MSSGSKEGGGGSPAYHLPHPHPHPPQHAQ. The region spanning 34 to 285 is the Protein kinase domain; it reads YRLEKTLGKG…LEQIQKHPWY (252 aa). Residues 40 to 48 and Lys-63 contribute to the ATP site; that span reads LGKGQTGLV. Asp-156 serves as the catalytic Proton acceptor. Thr-189 carries the phosphothreonine; by LKB1 modification. Ser-193 carries the post-translational modification Phosphoserine. The UBA domain maps to 314-356; it reads ELDPDVLESMASLGCFRDRERLHRELRSEEENQEKMIYYLLLD. Residues 362-383 show a composition bias toward basic and acidic residues; the sequence is PSCEDQDLPPRNDVDPPRKRVD. Positions 362–548 are disordered; it reads PSCEDQDLPP…SPGGGVGGAA (187 aa). Phosphoserine is present on residues Ser-399, Ser-443, Ser-447, and Ser-450. Residues 430–457 show a composition bias toward low complexity; sequence SRSVSGASTGLSSSPLSSPRSPVFSFSP. Arg-466, Arg-481, Arg-484, and Arg-498 each carry omega-N-methylarginine. The span at 491–508 shows a compositional bias: pro residues; it reads QPPPPSARSTPLPGPPGS. Ser-508 carries the post-translational modification Phosphoserine. The segment covering 509–533 has biased composition (low complexity); that stretch reads PRSSGGTPLHSPLHTPRASPTGTPG. Arg-525 bears the Omega-N-methylarginine mark. Thr-529 and Thr-535 each carry phosphothreonine. Arg-550 bears the Omega-N-methylarginine mark. Thr-583 bears the Phosphothreonine mark. Phosphoserine occurs at positions 586, 587, and 601. Residues 719–778 form a disordered region; it reads QPSVQALADEKNGAQTRPAGTPPRSLQPPPGRPDPDLSSSPRRGPSKDKKLLATNGTPLP.

The protein belongs to the protein kinase superfamily. CAMK Ser/Thr protein kinase family. SNF1 subfamily. The cofactor is Mg(2+). Phosphorylated at Thr-189 by STK11/LKB1 in complex with STE20-related adapter-alpha (STRADA) pseudo kinase and CAB39. Not phosphorylated at Thr-189 by CaMKK2. In contrast, it is phosphorylated and activated by CaMKK1. May be inactivated via dephosphorylation of Thr-189 by PP2C. May be autophosphorylated. As to expression, mainly present in brain. Present in presynaptic nerve terminals (at protein level).

It localises to the cytoplasm. The protein localises to the nucleus. It is found in the cytoskeleton. The protein resides in the microtubule organizing center. Its subcellular location is the centrosome. It localises to the synapse. The protein localises to the presynaptic active zone. It is found in the cytoplasmic vesicle. The protein resides in the secretory vesicle. Its subcellular location is the synaptic vesicle. The catalysed reaction is L-seryl-[protein] + ATP = O-phospho-L-seryl-[protein] + ADP + H(+). The enzyme catalyses L-threonyl-[protein] + ATP = O-phospho-L-threonyl-[protein] + ADP + H(+). It carries out the reaction L-seryl-[tau protein] + ATP = O-phospho-L-seryl-[tau protein] + ADP + H(+). It catalyses the reaction L-threonyl-[tau protein] + ATP = O-phospho-L-threonyl-[tau protein] + ADP + H(+). Activated by phosphorylation on Thr-189 by STK11/LKB1. Serine/threonine-protein kinase that plays a key role in polarization of neurons and centrosome duplication. Phosphorylates CDC25B, CDC25C, MAPT/TAU, RIMS1, TUBG1, TUBG2 and WEE1. Following phosphorylation and activation by STK11/LKB1, acts as a key regulator of polarization of cortical neurons, probably by mediating phosphorylation of microtubule-associated proteins such as MAPT/TAU at 'Thr-523' and 'Ser-573'. Also regulates neuron polarization by mediating phosphorylation of WEE1 at 'Ser-642' in postmitotic neurons, leading to down-regulate WEE1 activity in polarized neurons. Also acts as a positive regulator of centrosome duplication by mediating phosphorylation of gamma-tubulin (TUBG1 and TUBG2) at 'Ser-131', leading to translocation of gamma-tubulin and its associated proteins to the centrosome. Involved in the UV-induced DNA damage checkpoint response, probably by inhibiting CDK1 activity through phosphorylation and activation of WEE1, and inhibition of CDC25B and CDC25C. In neurons, localizes to synaptic vesicles and plays a role in neurotransmitter release, possibly by phosphorylating RIMS1. This chain is Serine/threonine-protein kinase BRSK1 (Brsk1), found in Rattus norvegicus (Rat).